The sequence spans 458 residues: Tetracycline resistance protein (458 aa).

12 consecutive transmembrane segments (helical) span residues H12–L33, L81–H100, F111–A129, A140–V162, Y165–L185, M201–Y221, F223–I240, V256–V276, G297–V317, Y324–I344, A346–T365, and M432–Y451.

Belongs to the major facilitator superfamily. TCR/Tet family.

Its subcellular location is the cell membrane. In terms of biological role, resistance to tetracycline by an active tetracycline efflux. This is an energy-dependent process that decreases the accumulation of the antibiotic in whole cells. This protein functions as a metal-tetracycline/H(+) antiporter. In Bacillus subtilis (strain 168), this protein is Tetracycline resistance protein (tetB).